We begin with the raw amino-acid sequence, 366 residues long: Phospho-N-acetylmuramoyl-pentapeptide-transferase (366 aa).

10 helical membrane passes run 3-23 (QIFIAGAVAFLAAVLFTPVLI), 55-75 (IAILVGITLGYIVAVLVGLVF), 80-100 (PGVSGWLVLGLTLALGGVGFA), 118-138 (AKLICQLVIAIAFGVMILQFP), 161-181 (IAVGGAVIGMILFLIFINIVI), 197-217 (LASGVTAIVMGAYVLITFWQF), 235-255 (PLDLAMLASAGLGACLGFLWW), 262-282 (IFMGDTGSLALGGLVAGLSIT), 287-307 (LLMIIVGAIFVLETVSVVIQV), and 341-361 (FWLLAALAAMTGFGLFYGEWL).

The protein belongs to the glycosyltransferase 4 family. MraY subfamily. The cofactor is Mg(2+).

Its subcellular location is the cell membrane. It catalyses the reaction UDP-N-acetyl-alpha-D-muramoyl-L-alanyl-gamma-D-glutamyl-meso-2,6-diaminopimeloyl-D-alanyl-D-alanine + di-trans,octa-cis-undecaprenyl phosphate = di-trans,octa-cis-undecaprenyl diphospho-N-acetyl-alpha-D-muramoyl-L-alanyl-D-glutamyl-meso-2,6-diaminopimeloyl-D-alanyl-D-alanine + UMP. Its pathway is cell wall biogenesis; peptidoglycan biosynthesis. In terms of biological role, catalyzes the initial step of the lipid cycle reactions in the biosynthesis of the cell wall peptidoglycan: transfers peptidoglycan precursor phospho-MurNAc-pentapeptide from UDP-MurNAc-pentapeptide onto the lipid carrier undecaprenyl phosphate, yielding undecaprenyl-pyrophosphoryl-MurNAc-pentapeptide, known as lipid I. This Corynebacterium urealyticum (strain ATCC 43042 / DSM 7109) protein is Phospho-N-acetylmuramoyl-pentapeptide-transferase.